A 209-amino-acid polypeptide reads, in one-letter code: ATP-dependent dethiobiotin synthetase BioD (209 aa).

Residue 13 to 18 (DIGKTV) coordinates ATP. Thr17 contributes to the Mg(2+) binding site. Lys33 is an active-site residue. 2 residues coordinate Mg(2+): Arg47 and Glu100. ATP-binding positions include 100–103 (EGAG) and 184–186 (PRL).

It belongs to the dethiobiotin synthetase family. Homodimer. Mg(2+) serves as cofactor.

Its subcellular location is the cytoplasm. The catalysed reaction is (7R,8S)-7,8-diammoniononanoate + CO2 + ATP = (4R,5S)-dethiobiotin + ADP + phosphate + 3 H(+). Its pathway is cofactor biosynthesis; biotin biosynthesis; biotin from 7,8-diaminononanoate: step 1/2. Its function is as follows. Catalyzes a mechanistically unusual reaction, the ATP-dependent insertion of CO2 between the N7 and N8 nitrogen atoms of 7,8-diaminopelargonic acid (DAPA, also called 7,8-diammoniononanoate) to form a ureido ring. This is ATP-dependent dethiobiotin synthetase BioD from Rhodopseudomonas palustris (strain BisB18).